We begin with the raw amino-acid sequence, 672 residues long: uncharacterized protein (672 aa).

This sequence belongs to the MG032/MG096/MG288 family.

This is an uncharacterized protein from Mycoplasma pneumoniae (strain ATCC 29342 / M129 / Subtype 1) (Mycoplasmoides pneumoniae).